Here is a 199-residue protein sequence, read N- to C-terminus: N-(5'-phosphoribosyl)anthranilate isomerase (199 aa).

The protein belongs to the TrpF family.

The enzyme catalyses N-(5-phospho-beta-D-ribosyl)anthranilate = 1-(2-carboxyphenylamino)-1-deoxy-D-ribulose 5-phosphate. Its pathway is amino-acid biosynthesis; L-tryptophan biosynthesis; L-tryptophan from chorismate: step 3/5. The polypeptide is N-(5'-phosphoribosyl)anthranilate isomerase (Campylobacter jejuni subsp. jejuni serotype O:2 (strain ATCC 700819 / NCTC 11168)).